The primary structure comprises 4080 residues: Hybrid PKS-NRPS synthetase poxE (4080 aa).

One can recognise a Ketosynthase family 3 (KS3) domain in the interval 8 to 442 (REPIAIVGSG…GTNAHAIIEA (435 aa)). Active-site for beta-ketoacyl synthase activity residues include Cys-181, His-320, and His-362. A malonyl-CoA:ACP transacylase (MAT) domain region spans residues 554–878 (VFTGQGAQWA…QRGMNDVEAM (325 aa)). An N-terminal hotdog fold region spans residues 944–1078 (HPILGTRCPD…GRLVITYGPV (135 aa)). The PKS/mFAS DH domain occupies 944–1246 (HPILGTRCPD…AVPLEATNAD (303 aa)). Residues 945 to 1243 (PILGTRCPDG…GIHAVPLEAT (299 aa)) are dehydratase (DH) domain. His-976 serves as the catalytic Proton acceptor; for dehydratase activity. Positions 1093–1246 (MVDVPSERFY…AVPLEATNAD (154 aa)) are C-terminal hotdog fold. Residue Asp-1152 is the Proton donor; for dehydratase activity of the active site. The tract at residues 1400-1585 (HFSDYLASVV…GVDTFTSDAD (186 aa)) is methyltransferase (MT) domain. Positions 2118–2292 (TYWLVGLTGS…AGSVMNIGAI (175 aa)) are ketoreductase (KR)domain. The peptidyl carrier protein stretch occupies residues 2399 to 2478 (TTDEIYEVIK…TIGEIIKFVL (80 aa)). The Carrier 1 domain occupies 2405–2481 (EVIKECFIVK…EIIKFVLEKL (77 aa)). Ser-2441 carries the post-translational modification O-(pantetheine 4'-phosphoryl)serine. Residues 2488 to 2569 (SLGLSPPTGA…AASPSIHTEE (82 aa)) are disordered. Residues 2511–2525 (VVVERRNVPRLEKKI) show a composition bias toward basic and acidic residues. Residues 2528 to 2545 (SAGSRTSSSVTGTSKSVS) show a composition bias toward low complexity. Positions 2551 to 2565 (DTASSQTSEAASPSI) are enriched in polar residues. The condensation stretch occupies residues 2607–3036 (KEPLSFGQSR…DSKQPGGHVS (430 aa)). Positions 3069-3478 (DMAKQYPQKL…DGRLRIEGRI (410 aa)) are adenylation. The Carrier 2 domain occupies 3593-3673 (AHLNEAQAQM…KMALLIKPQE (81 aa)). Residues 3598 to 3670 (AQAQMVQLWE…TLEKMALLIK (73 aa)) are thiolation. At Ser-3633 the chain carries O-(pantetheine 4'-phosphoryl)serine. Residues 3740-3959 (LTGATGFIGQ…DFVPVEQVVR (220 aa)) form a reductase (RED) domain region.

It in the C-terminal section; belongs to the NRP synthetase family.

The protein operates within secondary metabolite biosynthesis. Hybrid PKS-NRPS synthetase; part of the gene cluster that mediates the biosynthesis of oxaleimides, cytotoxic compounds containing an unusual disubstituted succinimide moiety. The first step of the pathway is provided by the HR-PKS poxF that serves in a new mode of collaborative biosynthesis with the PKS-NRPS poxE, by providing the olefin containing amino acid substrate via the synthesis of an ACP-bound dec-4-enoate. The cytochrome P450 monooxygenase poxM-catalyzed oxidation at the alpha-position creates the enzyme-bound 2-hydroxydec-4-enoyl-ACP thioester, which may be prone to spontaneous hydrolysis to yield 2-hydroxydec-4-enoic acid due to increased electrophilicity of the carbonyl. 2-hydroxydec-4-enoic acid can then be further oxidized by poxM to yield the alpha-ketoacid 2-oxodec-4-enoicacid, which is reductively aminated by the aminotransferase poxL to yield (S,E)-2-aminodec-4-enoic acid. The Hybrid PKS-NRPS synthetase poxE then performs condensation between the octaketide product of its PKS modules and the amino group of (S,E)-2-aminodec-4-enoic acid which is activated and incorporated by the adenylation domain. The resulting aminoacyl product can be cyclized by the Diels-Alderase PoxQ and reductively released by the reductive (R) domain of poxE to yield an aldehyde intermediate. The released aldehyde is then substrate for a Knoevenagel condensation by the hydrolyase poxO followed by an oxidation at the 5-position of the pyrrolidone ring. The presence of the olefin from the amino acid building block allows for migration of the substituted allyl group to occur. This allylic transposition reaction takes place in a conjugate addition, semipinacol-like fashion to yield a succinimide intermediate. Iterative two-electron oxidations of the C7 methyl of the succinimide intermediate to the carboxylic acid can be catalyzed by one of two remaining cytochrome P450 monooxygenasess poxC or poxD to yield oxaleimide A. Subsequent oxidation yields the maleimide scaffold oxaleimide I. Both oxaleimide A and oxaleimide I can undergo oxidative modifications in the decalin ring to yield the series of products oxaleimides B to H. The chain is Hybrid PKS-NRPS synthetase poxE from Penicillium oxalicum (strain 114-2 / CGMCC 5302) (Penicillium decumbens).